The following is an 80-amino-acid chain: Small ribosomal subunit protein bS18 (80 aa).

Belongs to the bacterial ribosomal protein bS18 family. In terms of assembly, part of the 30S ribosomal subunit. Forms a tight heterodimer with protein bS6.

In terms of biological role, binds as a heterodimer with protein bS6 to the central domain of the 16S rRNA, where it helps stabilize the platform of the 30S subunit. The sequence is that of Small ribosomal subunit protein bS18 from Acholeplasma laidlawii (strain PG-8A).